Here is a 1129-residue protein sequence, read N- to C-terminus: Ubiquitin carboxyl-terminal hydrolase 15 (1129 aa).

A disordered region spans residues 1–26 (MVLSNVDAEEVNMDSSMELEESSQEP). Over residues 7 to 23 (DAEEVNMDSSMELEESS) the composition is skewed to acidic residues. Residues 51-204 (HASYSWVVKN…NDEICISVTV (154 aa)) enclose the MATH domain. Residues 230–545 (VGLKNQGATC…NAYMLVYFRK (316 aa)) enclose the USP domain. The active-site Nucleophile is Cys-239. His-481 serves as the catalytic Proton acceptor.

Belongs to the peptidase C19 family.

It is found in the nucleus. The catalysed reaction is Thiol-dependent hydrolysis of ester, thioester, amide, peptide and isopeptide bonds formed by the C-terminal Gly of ubiquitin (a 76-residue protein attached to proteins as an intracellular targeting signal).. In terms of biological role, hydrolase that deubiquitinates target proteins. Cleaves the UBL propeptide in sde2. Involved in regulating the steady-state levels of proteins including prp4. This is Ubiquitin carboxyl-terminal hydrolase 15 from Schizosaccharomyces pombe (strain 972 / ATCC 24843) (Fission yeast).